The chain runs to 272 residues: Putative G-protein coupled receptor GPR32P1 (272 aa).

The segment at 1 to 24 (MNGVSEGTRGCSDRQPGALTQGHS) is disordered. Topologically, residues 1–46 (MNGVSEGTRGCSDRQPGALTQGHSCSRKMNASRCLSEEVGSLRPLT) are extracellular. Asn30 carries N-linked (GlcNAc...) asparagine glycosylation. The helical transmembrane segment at 47–67 (MAVLSASFVVGVLGNGLVPWV) threads the bilayer. Topologically, residues 68–78 (TVFRMARTVST) are cytoplasmic. Residues 79-99 (VCFFHLALADFMLSLSLPILV) form a helical membrane-spanning segment. Over 100-116 (YYIVSRQWLLGEWACKL) the chain is Extracellular. A disulfide bridge connects residues Cys114 and Cys191. The helical transmembrane segment at 117–137 (YTGFVFLTFSTSNCLLVLISV) threads the bilayer. The Cytoplasmic portion of the chain corresponds to 138–158 (DRCISVLYPVWALNHRTEQRA). The chain crosses the membrane as a helical span at residues 159–179 (SWLAFGVWLLAAALCSAHLKF). The Extracellular portion of the chain corresponds to 180-213 (RTTRKWNGCMQCYLQFNLENETAQMWTQEVFGRQ). Asn199 carries N-linked (GlcNAc...) asparagine glycosylation. The helical transmembrane segment at 214–234 (MAVIMAHFLLGFLGPLAIIGT) threads the bilayer. The Cytoplasmic segment spans residues 235-272 (CAHLIRAKLLREGWVHANRPKRLLLVLVSALSAGSHLT).

This sequence belongs to the G-protein coupled receptor 1 family.

It is found in the cell membrane. In terms of biological role, orphan receptor. This Homo sapiens (Human) protein is Putative G-protein coupled receptor GPR32P1 (GPR32P1).